The primary structure comprises 2093 residues: Nuclear-pore anchor (2093 aa).

Coiled-coil stretches lie at residues 57-362 (LEQK…TDEL), 439-529 (MILQ…RDVQ), 570-627 (DING…RAEE), and 688-1172 (QEKA…LEAK). Residues 1175-1198 (NSAEKNSRSGTISSGSTDSDHLED) are disordered. A compositionally biased stretch (low complexity) spans 1182–1191 (RSGTISSGST). Coiled coils occupy residues 1208 to 1252 (LRRT…AERA) and 1293 to 1585 (EKCQ…LKHA). 3 disordered regions span residues 1453–1489 (YEKE…AVVE), 1525–1555 (KKDE…KKEK), and 1627–2093 (SNSQ…PSPP). A compositionally biased stretch (basic and acidic residues) spans 1470–1483 (QLEEAKEEAGKRTT). Positions 1652–1674 (STMTRVPSSTPLIKSPVATTQQL) are enriched in polar residues. Basic and acidic residues-rich tracts occupy residues 1710–1719 (KPEESPKVDV) and 1729–1740 (DEGKQPAAHEPE). A compositionally biased stretch (polar residues) spans 1764 to 1779 (SEPQQDSLTQGETSSE). Residues 1789 to 1808 (KGSESHPDTSEGENLAKEPA) are compositionally biased toward basic and acidic residues. A coiled-coil region spans residues 1818–1849 (TTDGDNEETEAENAEEKTEEYVEAQQDNEADE). 2 stretches are compositionally biased toward acidic residues: residues 1821–1830 (GDNEETEAEN) and 1838–1903 (YVEA…EEGT). Positions 1921–1931 (TLATPTQSPSR) are enriched in polar residues. The segment covering 1935–1963 (AMEEAETTIETPVEDDKTDEGGDAAEEAA) has biased composition (acidic residues). Over residues 1984-2009 (TSAATTSPVSTAPTTSSTLASAITSS) the composition is skewed to low complexity. A Phosphoserine modification is found at serine 2022.

Part of the nuclear pore complex (NPC). The NPC has an eight-fold symmetrical structure comprising a central transport channel and two rings, the cytoplasmic and nuclear rings, to which eight filaments are attached. The cytoplasmic filaments have loose ends, while the nuclear filaments are joined in a distal ring, forming a nuclear basket. NPCs are highly dynamic in configuration and composition, and can be devided in 3 subcomplexes, the NUP62 subcomplex, the NUP107-160 subcomplex and the NUP93 subcomplex, containing approximately 30 different nucleoporin proteins. Interacts with MAD1 and (via N-terminus) with ESD4. As to expression, ubiquitous. Highest expression in the shoot apical region.

The protein localises to the nucleus envelope. The protein resides in the nucleus membrane. Its subcellular location is the nucleus. It is found in the nuclear pore complex. Component of the nuclear pore complex. Acts as a docking site for activities required for desumoylation and mRNA export. Required for the proper expression or localization of a subset of miRNAs. Plays a role in meristematic cell division by interacting with spindle assembly checkpoint proteins. In Arabidopsis thaliana (Mouse-ear cress), this protein is Nuclear-pore anchor.